A 23-amino-acid polypeptide reads, in one-letter code: Basic phospholipase A2 homolog (23 aa).

In terms of processing, contains 7 disulfide bonds. Expressed by the venom gland.

Its subcellular location is the secreted. This Trimeresurus stejnegeri (Chinese green tree viper) protein is Basic phospholipase A2 homolog.